We begin with the raw amino-acid sequence, 395 residues long: ATP phosphoribosyltransferase regulatory subunit (395 aa).

This sequence belongs to the class-II aminoacyl-tRNA synthetase family. HisZ subfamily. Heteromultimer composed of HisG and HisZ subunits.

Its subcellular location is the cytoplasm. It functions in the pathway amino-acid biosynthesis; L-histidine biosynthesis; L-histidine from 5-phospho-alpha-D-ribose 1-diphosphate: step 1/9. Functionally, required for the first step of histidine biosynthesis. May allow the feedback regulation of ATP phosphoribosyltransferase activity by histidine. The polypeptide is ATP phosphoribosyltransferase regulatory subunit (Pseudomonas fluorescens (strain ATCC BAA-477 / NRRL B-23932 / Pf-5)).